The primary structure comprises 103 residues: Large ribosomal subunit protein uL23 (103 aa).

The protein belongs to the universal ribosomal protein uL23 family. In terms of assembly, part of the 50S ribosomal subunit. Contacts protein L29, and trigger factor when it is bound to the ribosome.

Its function is as follows. One of the early assembly proteins it binds 23S rRNA. One of the proteins that surrounds the polypeptide exit tunnel on the outside of the ribosome. Forms the main docking site for trigger factor binding to the ribosome. The sequence is that of Large ribosomal subunit protein uL23 from Pelodictyon phaeoclathratiforme (strain DSM 5477 / BU-1).